Here is a 668-residue protein sequence, read N- to C-terminus: Phosphatidylinositol 4-phosphate 5-kinase type-1 gamma (668 aa).

A disordered region spans residues 45–67 (SMTAQPGPGHGKKLGHRGVDASG). The 369-residue stretch at 75–443 (TSSTLKGAIQ…RFFKFMSNTV (369 aa)) folds into the PIPK domain. N6-acetyllysine is present on residues lysine 265 and lysine 268. The residue at position 459 (arginine 459) is an Asymmetric dimethylarginine; alternate. An Omega-N-methylarginine; alternate modification is found at arginine 459. Low complexity predominate over residues 526–535 (TTLSSTSLSI). 2 disordered regions span residues 526–578 (TTLS…ITVQ) and 593–642 (EDAG…YFPT). Position 555 is a phosphoserine (serine 555). Tyrosine 639 is modified (phosphotyrosine; by EGFR). The interval 641–668 (PTDERSWVYSPLHYSAQAPPASDGESDT) is mediates interaction with TLN2. Tyrosine 649 carries the post-translational modification Phosphotyrosine; by CSK. Residue serine 650 is modified to Phosphoserine; by CDK5, MAPK1 and CDK1. Phosphoserine occurs at positions 662 and 666. Position 668 is a phosphothreonine (threonine 668).

Interacts with TLN1. Interacts with TLN2; interaction stimulates 1-phosphatidylinositol-4-phosphate 5-kinase activity. May compete with beta-integrins for the same binding site on TLN1 and TLN2. Interacts with ARF6; interaction stimulates 1-phosphatidylinositol-4-phosphate 5-kinase activity. Interacts with AP2B1. Interacts with AP2M1; phosphorylation of PIP5K1C by CSK disrupts the interaction; clathrin competes with PIP5K1C. Interacts with CDH1. Interacts with CSK. Interacts with PLCG1; interaction is abolished upon EGF stimulation. Interacts with LAPTM4B; promotes SNX5 association with LAPTM4B; kinase activity of PIP5K1C is required; interaction is regulated by phosphatidylinositol 4,5-bisphosphate generated by PIP5K1C. Post-translationally, phosphorylation on Ser-650 negatively regulates binding to TLN2 and is strongly stimulated in mitosis. Phosphorylation on Tyr-649 is necessary for targeting to focal adhesions. Phosphorylation on Ser-650 and Tyr-649 are mutually exclusive. Phosphorylated by SYK and CSK. Tyrosine phosphorylation is enhanced by PTK2 signaling. Phosphorylated at Tyr-639 upon EGF stimulation. Some studies suggest that phosphorylation on Tyr-649 enhances binding to tailins (TLN1 and TLN2). According to PubMed:15738269 phosphorylation at Tyr-649 does not directly enhance binding to tailins (TLN1 and TLN2) but may act indirectly by inhibiting phosphorylation at Ser-650. In terms of processing, acetylation at Lys-265 and Lys-268 seems to decrease lipid 1-phosphatidylinositol-4-phosphate 5-kinase activity. Deacetylation of these sites by SIRT1 positively regulates the exocytosis of TSH-containing granules from pituitary cells. Isoform 1 is strongly expressed in brain and also detected in heart and lung. In terms of tissue distribution, isoform 2 is strongly expressed in pancreas and liver and in lesser quantities in brain, heart, lung and kidney. As to expression, isoform 3 is detected in large amounts in heart and large intestine, is also present in lung, pancreas and thyroid, and to a lesser extent in brain, stomach and kidney.

It is found in the cell membrane. The protein resides in the endomembrane system. It localises to the cytoplasm. Its subcellular location is the cell junction. The protein localises to the focal adhesion. It is found in the adherens junction. The protein resides in the cell projection. It localises to the ruffle membrane. Its subcellular location is the phagocytic cup. The protein localises to the uropodium. It is found in the nucleus. The catalysed reaction is a 1,2-diacyl-sn-glycero-3-phospho-(1D-myo-inositol 4-phosphate) + ATP = a 1,2-diacyl-sn-glycero-3-phospho-(1D-myo-inositol-4,5-bisphosphate) + ADP + H(+). It carries out the reaction 1-octadecanoyl-2-(5Z,8Z,11Z,14Z)-eicosatetraenoyl-sn-glycero-3-phospho-1D-myo-inositol 4-phosphate + ATP = 1-octadecanoyl-2-(5Z,8Z,11Z,14Z)-eicosatetraenoyl-sn-glycero-3-phospho-1D-myo-inositol 4,5-bisphosphate + ADP + H(+). The enzyme catalyses 1-octadecanoyl-2-(9Z)-octadecenoyl-sn-glycero-3-phospho-1D-myo-inositol 4-phosphate + ATP = 1-octadecanoyl-2-(9Z)-octadecenoyl-sn-glycero-3-phospho-1D-myo-inositol 4,5-bisphosphate + ADP + H(+). It catalyses the reaction 1-octadecanoyl-2-(9Z)-octadecenoyl-sn-glycero-3-phospho-1D-myo-inositol + ATP = 1-octadecanoyl-2-(9Z)-octadecenoyl-sn-glycero-3-phospho-1D-myo-inositol 5-phosphate + ADP + H(+). The catalysed reaction is 1-octadecanoyl-2-(9Z,12Z)-octadecadienoyl-sn-glycero-3-phospho-1D-myo-inositol + ATP = 1-octadecanoyl-2-(9Z,12Z)-octadecadienoyl-sn-glycero-3-phospho-1D-myo-inositol 5-phosphate + ADP + H(+). It carries out the reaction 1-octadecanoyl-2-(5Z,8Z,11Z,14Z-eicosatetraenoyl)-sn-glycero-3-phospho-(1D-myo-inositol) + ATP = 1-octadecanoyl-2-(5Z,8Z,11Z,14Z)-eicosatetraenoyl-sn-glycero-3-phospho-1D-myo-inositol 5-phosphate + ADP + H(+). The enzyme catalyses 1,2-di-(9Z,12Z)-octadecadienoyl-sn-glycero-3-phospho-1D-myo-inositol + ATP = 1,2-di(9Z,12Z)-octadecadienoyl-sn-glycero-3-phospho-1D-myo-inositol 5-phosphate + ADP + H(+). Its function is as follows. Catalyzes the phosphorylation of phosphatidylinositol 4-phosphate (PtdIns(4)P/PI4P) to form phosphatidylinositol 4,5-bisphosphate (PtdIns(4,5)P2/PIP2), a lipid second messenger that regulates several cellular processes such as signal transduction, vesicle trafficking, actin cytoskeleton dynamics, cell adhesion, and cell motility. PtdIns(4,5)P2 can directly act as a second messenger or can be utilized as a precursor to generate other second messengers: inositol 1,4,5-trisphosphate (IP3), diacylglycerol (DAG) or phosphatidylinositol-3,4,5-trisphosphate (PtdIns(3,4,5)P3/PIP3). PIP5K1A-mediated phosphorylation of PtdIns(4)P is the predominant pathway for PtdIns(4,5)P2 synthesis. Together with PIP5K1A, is required for phagocytosis, both enzymes regulating different types of actin remodeling at sequential steps. Promotes particle attachment by generating the pool of PtdIns(4,5)P2 that induces controlled actin depolymerization to facilitate Fc-gamma-R clustering. Mediates RAC1-dependent reorganization of actin filaments. Required for synaptic vesicle transport. Controls the plasma membrane pool of PtdIns(4,5)P2 implicated in synaptic vesicle endocytosis and exocytosis. Plays a role in endocytosis mediated by clathrin and AP-2 (adaptor protein complex 2). Required for clathrin-coated pits assembly at the synapse. Participates in cell junction assembly. Modulates adherens junctions formation by facilitating CDH1/cadherin trafficking. Required for focal adhesion dynamics. Modulates the targeting of talins (TLN1 and TLN2) to the plasma membrane and their efficient assembly into focal adhesions. Regulates the interaction between talins (TLN1 and TLN2) and beta-integrins. Required for uropodium formation and retraction of the cell rear during directed migration. Has a role in growth factor-stimulated directional cell migration and adhesion. Required for talin assembly into nascent adhesions forming at the leading edge toward the direction of the growth factor. Negative regulator of T-cell activation and adhesion. Negatively regulates integrin alpha-L/beta-2 (LFA-1) polarization and adhesion induced by T-cell receptor. Together with PIP5K1A has a role during embryogenesis and together with PIP5K1B may have a role immediately after birth. This is Phosphatidylinositol 4-phosphate 5-kinase type-1 gamma from Homo sapiens (Human).